The chain runs to 371 residues: Peptidyl-prolyl cis-trans isomerase D (371 aa).

A PPIase cyclophilin-type domain is found at 8–172 (FFDIAIGGQL…EPVVIADCGQ (165 aa)). Positions 175–202 (SDDPFLAERTSTDGDPYEDYPDDEDQEL) are disordered. Over residues 189 to 201 (DPYEDYPDDEDQE) the composition is skewed to acidic residues. TPR repeat units follow at residues 212-245 (AKTIREVANRLYKQGDISGALQKYSKSIRYLDVH), 265-303 (APLLLNSALAAIRIEPHSAANAMNAVANTSRALNRLELS), and 308-341 (AKAYYRRGLAKTIMRDEVGAEQDLKTANELLPED).

The protein belongs to the cyclophilin-type PPIase family. PPIase D subfamily.

The protein localises to the cytoplasm. It carries out the reaction [protein]-peptidylproline (omega=180) = [protein]-peptidylproline (omega=0). Its function is as follows. PPIases accelerate the folding of proteins. It catalyzes the cis-trans isomerization of proline imidic peptide bonds in oligopeptides. This Amanita muscaria (Fly agaric) protein is Peptidyl-prolyl cis-trans isomerase D (Cyp40).